Consider the following 448-residue polypeptide: Methylenetetrahydrofolate--tRNA-(uracil-5-)-methyltransferase TrmFO (448 aa).

13-18 contacts FAD; the sequence is GAGLAG.

Belongs to the MnmG family. TrmFO subfamily. The cofactor is FAD.

Its subcellular location is the cytoplasm. It carries out the reaction uridine(54) in tRNA + (6R)-5,10-methylene-5,6,7,8-tetrahydrofolate + NADH + H(+) = 5-methyluridine(54) in tRNA + (6S)-5,6,7,8-tetrahydrofolate + NAD(+). It catalyses the reaction uridine(54) in tRNA + (6R)-5,10-methylene-5,6,7,8-tetrahydrofolate + NADPH + H(+) = 5-methyluridine(54) in tRNA + (6S)-5,6,7,8-tetrahydrofolate + NADP(+). Functionally, catalyzes the folate-dependent formation of 5-methyl-uridine at position 54 (M-5-U54) in all tRNAs. In Streptococcus pyogenes serotype M1, this protein is Methylenetetrahydrofolate--tRNA-(uracil-5-)-methyltransferase TrmFO.